Here is a 306-residue protein sequence, read N- to C-terminus: N(1)-aminopropylagmatine ureohydrolase (306 aa).

Residues His121, Asp145, His147, Asp149, Asp228, and Asp230 each coordinate Mn(2+).

Belongs to the arginase family. The cofactor is Mn(2+).

The catalysed reaction is N(1)-(3-aminopropyl)agmatine + H2O = urea + spermidine. It functions in the pathway amine and polyamine biosynthesis; spermidine biosynthesis. Its function is as follows. Ureohydrolase involved in the biosynthesis of spermidine via the carboxyaminopropylagmatine (CAPA) pathway. Catalyzes the conversion of aminopropylagmatine (APA) to spermidine and urea. Is highly specific to APA and incapable of releasing measurable urea from CAPA, agmatine, arginine, guanidine, guanidinobutyrate and guanidinopropionate. This Synechocystis sp. (strain ATCC 27184 / PCC 6803 / Kazusa) protein is N(1)-aminopropylagmatine ureohydrolase.